A 181-amino-acid polypeptide reads, in one-letter code: Large ribosomal subunit protein uL5 (181 aa).

This sequence belongs to the universal ribosomal protein uL5 family. Part of the 50S ribosomal subunit; contacts the 5S rRNA and probably tRNA. Forms a bridge to the 30S subunit in the 70S ribosome.

In terms of biological role, this is one of the proteins that bind and probably mediate the attachment of the 5S RNA into the large ribosomal subunit, where it forms part of the central protuberance. In the 70S ribosome it contacts protein S13 of the 30S subunit (bridge B1b), connecting the 2 subunits; this bridge is implicated in subunit movement. May contact the P site tRNA; the 5S rRNA and some of its associated proteins might help stabilize positioning of ribosome-bound tRNAs. This Methanococcus maripaludis (strain C5 / ATCC BAA-1333) protein is Large ribosomal subunit protein uL5.